Reading from the N-terminus, the 473-residue chain is Glutamate--tRNA ligase 2 (473 aa).

The 'HIGH' region motif lies at 11 to 21 (PSPTGYLHIGG). Residues 113-133 (KARAEGRPPRYDGRWRDRDPS) are compositionally biased toward basic and acidic residues. The segment at 113-136 (KARAEGRPPRYDGRWRDRDPSEAP) is disordered. Positions 240 to 244 (KLSKR) match the 'KMSKS' region motif. Position 243 (lysine 243) interacts with ATP.

Belongs to the class-I aminoacyl-tRNA synthetase family. Glutamate--tRNA ligase type 1 subfamily. As to quaternary structure, monomer.

It localises to the cytoplasm. The catalysed reaction is tRNA(Glu) + L-glutamate + ATP = L-glutamyl-tRNA(Glu) + AMP + diphosphate. Functionally, catalyzes the attachment of glutamate to tRNA(Glu) in a two-step reaction: glutamate is first activated by ATP to form Glu-AMP and then transferred to the acceptor end of tRNA(Glu). The polypeptide is Glutamate--tRNA ligase 2 (Brucella suis biovar 1 (strain 1330)).